The sequence spans 248 residues: UDP-2,3-diacylglucosamine hydrolase (248 aa).

Asp-8, His-10, Asp-41, Asn-79, and His-114 together coordinate Mn(2+). 79–80 contributes to the substrate binding site; it reads NR. Residues Asp-122, Asn-164, Arg-167, and His-195 each contribute to the substrate site. His-195 and His-197 together coordinate Mn(2+).

The protein belongs to the LpxH family. Mn(2+) is required as a cofactor.

Its subcellular location is the cell inner membrane. It catalyses the reaction UDP-2-N,3-O-bis[(3R)-3-hydroxytetradecanoyl]-alpha-D-glucosamine + H2O = 2-N,3-O-bis[(3R)-3-hydroxytetradecanoyl]-alpha-D-glucosaminyl 1-phosphate + UMP + 2 H(+). It participates in glycolipid biosynthesis; lipid IV(A) biosynthesis; lipid IV(A) from (3R)-3-hydroxytetradecanoyl-[acyl-carrier-protein] and UDP-N-acetyl-alpha-D-glucosamine: step 4/6. Its function is as follows. Hydrolyzes the pyrophosphate bond of UDP-2,3-diacylglucosamine to yield 2,3-diacylglucosamine 1-phosphate (lipid X) and UMP by catalyzing the attack of water at the alpha-P atom. Involved in the biosynthesis of lipid A, a phosphorylated glycolipid that anchors the lipopolysaccharide to the outer membrane of the cell. The chain is UDP-2,3-diacylglucosamine hydrolase from Wigglesworthia glossinidia brevipalpis.